Consider the following 459-residue polypeptide: tRNA(Ile)-lysidine synthase (459 aa).

38-43 (SGGMDS) contacts ATP.

This sequence belongs to the tRNA(Ile)-lysidine synthase family.

The protein localises to the cytoplasm. The catalysed reaction is cytidine(34) in tRNA(Ile2) + L-lysine + ATP = lysidine(34) in tRNA(Ile2) + AMP + diphosphate + H(+). In terms of biological role, ligates lysine onto the cytidine present at position 34 of the AUA codon-specific tRNA(Ile) that contains the anticodon CAU, in an ATP-dependent manner. Cytidine is converted to lysidine, thus changing the amino acid specificity of the tRNA from methionine to isoleucine. The sequence is that of tRNA(Ile)-lysidine synthase from Acinetobacter baylyi (strain ATCC 33305 / BD413 / ADP1).